The following is a 334-amino-acid chain: Transcription factor MYB92 (334 aa).

HTH myb-type domains are found at residues 9-61 and 62-116; these read DSGL…TNYL and RPDI…KKKL. DNA-binding regions (H-T-H motif) lie at residues 37 to 61 and 89 to 112; these read WRAL…TNYL and WSTI…NTHL.

Interacts with FBX5. As to expression, highly expressed in roots and at lower levels in stems, flowers and siliques.

The protein resides in the nucleus. Probable transcription factor. The sequence is that of Transcription factor MYB92 from Arabidopsis thaliana (Mouse-ear cress).